The primary structure comprises 267 residues: Hydroxyethylthiazole kinase 2 (267 aa).

Met-41 contributes to the substrate binding site. Residues Lys-116 and Thr-166 each coordinate ATP. Residue Gly-193 coordinates substrate.

It belongs to the Thz kinase family. The cofactor is Mg(2+).

The enzyme catalyses 5-(2-hydroxyethyl)-4-methylthiazole + ATP = 4-methyl-5-(2-phosphooxyethyl)-thiazole + ADP + H(+). It functions in the pathway cofactor biosynthesis; thiamine diphosphate biosynthesis; 4-methyl-5-(2-phosphoethyl)-thiazole from 5-(2-hydroxyethyl)-4-methylthiazole: step 1/1. Its function is as follows. Catalyzes the phosphorylation of the hydroxyl group of 4-methyl-5-beta-hydroxyethylthiazole (THZ). The chain is Hydroxyethylthiazole kinase 2 from Streptococcus pneumoniae (strain P1031).